A 327-amino-acid polypeptide reads, in one-letter code: MAYISSLDILETEIAIKKVKDFFESHLSKELDLLRVSAPLFVIPESGLNDNLNGTERPVSFDTKSGERVEIVHSLAKWKRMALYRYNIENDKGIYTDMNAIRRDEDTDFIHSYYVDQWDWEKIISKEDRNEEYLKDVVRKIYSVFKKTEEYITTEYPKLTKKLPEEITFITAQELENKYPNLTPKNREHAAAKEYGAIFLMKIGGKLSSGEKHDGRAPDYDDWDLNGDIIFNYPLLGIGLELSSMGIRVDEKSLDEQLKIANCEDRRSLPYHQMILNKVLPYTIGGGIGQSRICMFFLDKLHIGEVQASIWSQEVHEICRQMNIKLL.

This sequence belongs to the class-II aminoacyl-tRNA synthetase family. AsnA subfamily.

Its subcellular location is the cytoplasm. It carries out the reaction L-aspartate + NH4(+) + ATP = L-asparagine + AMP + diphosphate + H(+). Its pathway is amino-acid biosynthesis; L-asparagine biosynthesis; L-asparagine from L-aspartate (ammonia route): step 1/1. This is Aspartate--ammonia ligase from Fusobacterium nucleatum subsp. nucleatum (strain ATCC 25586 / DSM 15643 / BCRC 10681 / CIP 101130 / JCM 8532 / KCTC 2640 / LMG 13131 / VPI 4355).